The primary structure comprises 640 residues: Biosynthetic arginine decarboxylase (640 aa).

Lys105 carries the post-translational modification N6-(pyridoxal phosphate)lysine. 290–300 is a substrate binding site; the sequence is FDVGGGLAIDY.

It belongs to the Orn/Lys/Arg decarboxylase class-II family. SpeA subfamily. Mg(2+) is required as a cofactor. The cofactor is pyridoxal 5'-phosphate.

The enzyme catalyses L-arginine + H(+) = agmatine + CO2. Its function is as follows. Catalyzes the biosynthesis of agmatine from arginine. The sequence is that of Biosynthetic arginine decarboxylase from Vibrio vulnificus (strain CMCP6).